The following is a 300-amino-acid chain: 4-diphosphocytidyl-2-C-methyl-D-erythritol kinase (300 aa).

The active site involves Lys17. An ATP-binding site is contributed by 102–112 (PVAAGIGGGSA). Asp144 is an active-site residue.

Belongs to the GHMP kinase family. IspE subfamily.

The catalysed reaction is 4-CDP-2-C-methyl-D-erythritol + ATP = 4-CDP-2-C-methyl-D-erythritol 2-phosphate + ADP + H(+). Its pathway is isoprenoid biosynthesis; isopentenyl diphosphate biosynthesis via DXP pathway; isopentenyl diphosphate from 1-deoxy-D-xylulose 5-phosphate: step 3/6. Catalyzes the phosphorylation of the position 2 hydroxy group of 4-diphosphocytidyl-2C-methyl-D-erythritol. This Bradyrhizobium sp. (strain ORS 278) protein is 4-diphosphocytidyl-2-C-methyl-D-erythritol kinase.